Consider the following 299-residue polypeptide: Bifunctional protein FolD (299 aa).

NADP(+) is bound by residues glycine 168–serine 170, serine 193, and isoleucine 234.

This sequence belongs to the tetrahydrofolate dehydrogenase/cyclohydrolase family. As to quaternary structure, homodimer.

The catalysed reaction is (6R)-5,10-methylene-5,6,7,8-tetrahydrofolate + NADP(+) = (6R)-5,10-methenyltetrahydrofolate + NADPH. It carries out the reaction (6R)-5,10-methenyltetrahydrofolate + H2O = (6R)-10-formyltetrahydrofolate + H(+). The protein operates within one-carbon metabolism; tetrahydrofolate interconversion. Its function is as follows. Catalyzes the oxidation of 5,10-methylenetetrahydrofolate to 5,10-methenyltetrahydrofolate and then the hydrolysis of 5,10-methenyltetrahydrofolate to 10-formyltetrahydrofolate. This Brucella abortus (strain S19) protein is Bifunctional protein FolD.